Consider the following 345-residue polypeptide: Acetylserotonin O-methyltransferase (345 aa).

Residues tyrosine 147, tryptophan 164, aspartate 210, 235–237 (GDF), and arginine 252 contribute to the S-adenosyl-L-methionine site. The active-site Proton donor/acceptor is the histidine 255. The substrate site is built by aspartate 256, asparagine 302, and glutamine 306.

It belongs to the class I-like SAM-binding methyltransferase superfamily. Cation-independent O-methyltransferase family. In terms of assembly, homodimer. As to expression, expressed in the pineal gland (at protein level). Not detectable in retina, nor in liver.

The catalysed reaction is N-acetylserotonin + S-adenosyl-L-methionine = melatonin + S-adenosyl-L-homocysteine + H(+). Its pathway is aromatic compound metabolism; melatonin biosynthesis; melatonin from serotonin: step 1/2. Functionally, catalyzes the transfer of a methyl group onto N-acetylserotonin, producing melatonin (N-acetyl-5-methoxytryptamine). This chain is Acetylserotonin O-methyltransferase (ASMT), found in Bos taurus (Bovine).